We begin with the raw amino-acid sequence, 425 residues long: Serine--tRNA ligase (425 aa).

L-serine is bound at residue 231–233; sequence TAE. 262 to 264 serves as a coordination point for ATP; sequence RRE. Glutamate 285 contributes to the L-serine binding site. 349–352 is an ATP binding site; it reads EISS. Serine 385 contributes to the L-serine binding site.

It belongs to the class-II aminoacyl-tRNA synthetase family. Type-1 seryl-tRNA synthetase subfamily. Homodimer. The tRNA molecule binds across the dimer.

It is found in the cytoplasm. The catalysed reaction is tRNA(Ser) + L-serine + ATP = L-seryl-tRNA(Ser) + AMP + diphosphate + H(+). The enzyme catalyses tRNA(Sec) + L-serine + ATP = L-seryl-tRNA(Sec) + AMP + diphosphate + H(+). Its pathway is aminoacyl-tRNA biosynthesis; selenocysteinyl-tRNA(Sec) biosynthesis; L-seryl-tRNA(Sec) from L-serine and tRNA(Sec): step 1/1. Functionally, catalyzes the attachment of serine to tRNA(Ser). Is also able to aminoacylate tRNA(Sec) with serine, to form the misacylated tRNA L-seryl-tRNA(Sec), which will be further converted into selenocysteinyl-tRNA(Sec). The sequence is that of Serine--tRNA ligase from Aquifex aeolicus (strain VF5).